The primary structure comprises 112 residues: Transmembrane protein 14C (112 aa).

A run of 4 helical transmembrane segments spans residues 7-27, 32-52, 62-82, and 88-108; these read VVPL…GGII, AGSV…GLGA, VWVF…RFYH, and PAGL…VSMF.

The protein belongs to the TMEM14 family.

The protein resides in the mitochondrion membrane. In terms of biological role, required for normal heme biosynthesis. In Homo sapiens (Human), this protein is Transmembrane protein 14C (TMEM14C).